A 211-amino-acid polypeptide reads, in one-letter code: Methylamine utilization protein MauD (211 aa).

Residues Ile-5–Leu-25 traverse the membrane as a helical segment. Residues Pro-50 to Ser-187 enclose the Thioredoxin domain.

The protein resides in the membrane. Its pathway is one-carbon metabolism; methylamine degradation. Its function is as follows. May be specifically involved in the processing, transport, and/or maturation of the MADH beta-subunit. This chain is Methylamine utilization protein MauD (mauD), found in Methylophilus methylotrophus (Bacterium W3A1).